We begin with the raw amino-acid sequence, 622 residues long: Presenilin-A (622 aa).

The span at 1–16 (MKENEDEINKTDEKYK) shows a compositional bias: basic and acidic residues. 2 disordered regions span residues 1-65 (MKEN…NLEN) and 132-160 (VSEQNSDECGSKVDKDLDEDDDDDDDETE). Over 1-168 (MKENEDEINK…TEVPELVDYS (168 aa)) the chain is Cytoplasmic. Residues 21–62 (SNNGNNKNKNNNNNNNNNNNNNNNNNNNNNNNNNNNNNGNSN) are compositionally biased toward low complexity. The span at 147–160 (DLDEDDDDDDDETE) shows a compositional bias: acidic residues. A helical transmembrane segment spans residues 169–189 (EMIVSILYPVCITMVIVVLAI). The Lumenal portion of the chain corresponds to 190–227 (RAISSSTSKNSQIVEISNDNSGGNGDSSSGADKMVFDS). Residues 228-248 (VVNSLIFLAVIILSTTIMVVL) form a helical membrane-spanning segment. Topologically, residues 249–265 (YKFKLMKALYAWLMGTS) are cytoplasmic. Residues 266–286 (ILLLGVFGGFLFLILLAYLNL) traverse the membrane as a helical segment. Residues 287–289 (GLD) are Lumenal-facing. The chain crosses the membrane as a helical span at residues 290 to 310 (YVTFVIVVWNFSVGGIVCIFW). Position 311 (tyrosine 311) is a topological domain, cytoplasmic. The helical transmembrane segment at 312-332 (SPKLLNQGYLISISVLMALFF) threads the bilayer. Over 333-341 (SRLPDWTTW) the chain is Lumenal. A helical membrane pass occupies residues 342-362 (GILSIVSIYDIFAVLCPGGPL). The active site involves aspartate 351. Residues 363 to 538 (RILIETAQKR…SYVKPKQSIR (176 aa)) are Cytoplasmic-facing. Positions 419-477 (NNNNNEDENKNNTEDGNNNNNKNKNNNNNNNNRIENENGAENSSENGSITPPPTIPNFI) are disordered. Positions 432–466 (EDGNNNNNKNKNNNNNNNNRIENENGAENSSENGS) are enriched in low complexity. Residues 539–559 (LGLGDFVFYSVLIGKAASYQI) form a helical membrane-spanning segment. The active site involves aspartate 543. The Lumenal segment spans residues 560–562 (TTV). The helical transmembrane segment at 563-583 (FTVFIAIITGLFLTLILLAVF) threads the bilayer. Over 584–588 (RRALP) the chain is Cytoplasmic. The PAL signature appears at 588-590 (PAL). The segment at residues 589-609 (ALPMSIIFGIIVFFLTFKILI) is an intramembrane region (helical). The Cytoplasmic portion of the chain corresponds to 610–622 (QYIYFLGENQIFV).

This sequence belongs to the peptidase A22A family. In terms of assembly, homodimer. Component of the gamma-secretase complex, a complex composed of a presenilin homodimer, nicastrin, aph1 and pen2.

It is found in the endoplasmic reticulum membrane. The protein resides in the golgi apparatus membrane. Its function is as follows. Probable catalytic subunit of the gamma-secretase complex, an endoprotease complex that catalyzes the intramembrane cleavage of integral membrane proteins such as Notch receptors. Requires the other members of the gamma-secretase complex to have a protease activity. The protein is Presenilin-A (psenA) of Dictyostelium discoideum (Social amoeba).